The following is a 207-amino-acid chain: Uracil phosphoribosyltransferase (207 aa).

5-phospho-alpha-D-ribose 1-diphosphate contacts are provided by residues arginine 77, arginine 102, and 129 to 137; that span reads DPMLATGGS. Uracil-binding positions include isoleucine 192 and 197–199; that span reads GDA. 5-phospho-alpha-D-ribose 1-diphosphate is bound at residue aspartate 198.

The protein belongs to the UPRTase family. Mg(2+) is required as a cofactor.

The enzyme catalyses UMP + diphosphate = 5-phospho-alpha-D-ribose 1-diphosphate + uracil. Its pathway is pyrimidine metabolism; UMP biosynthesis via salvage pathway; UMP from uracil: step 1/1. Its activity is regulated as follows. Allosterically activated by GTP. Catalyzes the conversion of uracil and 5-phospho-alpha-D-ribose 1-diphosphate (PRPP) to UMP and diphosphate. In Mycoplasma mycoides subsp. mycoides SC (strain CCUG 32753 / NCTC 10114 / PG1), this protein is Uracil phosphoribosyltransferase.